A 69-amino-acid chain; its full sequence is DNA-directed RNA polymerase subunit omega (69 aa).

This sequence belongs to the RNA polymerase subunit omega family. As to quaternary structure, the RNAP catalytic core consists of 2 alpha, 1 beta, 1 beta' and 1 omega subunit. When a sigma factor is associated with the core the holoenzyme is formed, which can initiate transcription.

The enzyme catalyses RNA(n) + a ribonucleoside 5'-triphosphate = RNA(n+1) + diphosphate. Promotes RNA polymerase assembly. Latches the N- and C-terminal regions of the beta' subunit thereby facilitating its interaction with the beta and alpha subunits. In Pelotomaculum thermopropionicum (strain DSM 13744 / JCM 10971 / SI), this protein is DNA-directed RNA polymerase subunit omega.